The chain runs to 264 residues: MSKLKLHGFNNLTKSLSFCIYDICYAKTADDRDGYIAYIDEQYNANRLTEILSETCSIIGANILNIARQDYDPQGASVTILVSEEPVDPRDVDTSEHPGPLPSAVVAHLDKSHICVHTYPESHPEAGLCTFRADIEVSTCGVISPLKALNYLIHQLESDIVTMDYRVRGFTRDINGVKHFIDHKINSIQNFMSDDMKSLYHMMDVNVYQENIFHTKMMLKDFDLKHYLFNAKPEELSAEEKEQITCLLYKEMQEIYYGRNVPEV.

The active-site Schiff-base intermediate with substrate; via pyruvic acid is Ser-112. Residue Ser-112 is modified to Pyruvic acid (Ser); by autocatalysis. The Proton acceptor; for processing activity role is filled by His-117. Cys-140 (proton donor; for catalytic activity) is an active-site residue.

It belongs to the prokaryotic AdoMetDC family. Type 2 subfamily. As to quaternary structure, heterooctamer of four alpha and four beta chains arranged as a tetramer of alpha/beta heterodimers. Requires pyruvate as cofactor. In terms of processing, is synthesized initially as an inactive proenzyme. Formation of the active enzyme involves a self-maturation process in which the active site pyruvoyl group is generated from an internal serine residue via an autocatalytic post-translational modification. Two non-identical subunits are generated from the proenzyme in this reaction, and the pyruvate is formed at the N-terminus of the alpha chain, which is derived from the carboxyl end of the proenzyme. The post-translation cleavage follows an unusual pathway, termed non-hydrolytic serinolysis, in which the side chain hydroxyl group of the serine supplies its oxygen atom to form the C-terminus of the beta chain, while the remainder of the serine residue undergoes an oxidative deamination to produce ammonia and the pyruvoyl group blocking the N-terminus of the alpha chain.

The enzyme catalyses S-adenosyl-L-methionine + H(+) = S-adenosyl 3-(methylsulfanyl)propylamine + CO2. It functions in the pathway amine and polyamine biosynthesis; S-adenosylmethioninamine biosynthesis; S-adenosylmethioninamine from S-adenosyl-L-methionine: step 1/1. Functionally, catalyzes the decarboxylation of S-adenosylmethionine to S-adenosylmethioninamine (dcAdoMet), the propylamine donor required for the synthesis of the polyamines spermine and spermidine from the diamine putrescine. The sequence is that of S-adenosylmethionine decarboxylase proenzyme from Yersinia pseudotuberculosis serotype I (strain IP32953).